The following is a 266-amino-acid chain: Ras-like protein family member 12 (266 aa).

GTP contacts are provided by residues 27–34, 74–78, and 134–137; these read GRRGAGKS, DTADL, and NKLD.

It belongs to the small GTPase superfamily. Ras family.

The catalysed reaction is GTP + H2O = GDP + phosphate + H(+). The chain is Ras-like protein family member 12 (RASL12) from Bos taurus (Bovine).